The sequence spans 287 residues: Formamidopyrimidine-DNA glycosylase (287 aa).

The Schiff-base intermediate with DNA role is filled by Pro-2. Glu-3 functions as the Proton donor in the catalytic mechanism. The active-site Proton donor; for beta-elimination activity is Lys-61. 3 residues coordinate DNA: His-95, Arg-115, and Arg-157. The FPG-type zinc finger occupies 243-277; sequence NVYGRADQPCRRCGTPVRREAFMNRSSYSCPRCQP. Arg-267 functions as the Proton donor; for delta-elimination activity in the catalytic mechanism.

The protein belongs to the FPG family. As to quaternary structure, monomer. Requires Zn(2+) as cofactor.

It catalyses the reaction Hydrolysis of DNA containing ring-opened 7-methylguanine residues, releasing 2,6-diamino-4-hydroxy-5-(N-methyl)formamidopyrimidine.. The catalysed reaction is 2'-deoxyribonucleotide-(2'-deoxyribose 5'-phosphate)-2'-deoxyribonucleotide-DNA = a 3'-end 2'-deoxyribonucleotide-(2,3-dehydro-2,3-deoxyribose 5'-phosphate)-DNA + a 5'-end 5'-phospho-2'-deoxyribonucleoside-DNA + H(+). Functionally, involved in base excision repair of DNA damaged by oxidation or by mutagenic agents. Acts as a DNA glycosylase that recognizes and removes damaged bases. Has a preference for oxidized purines, such as 7,8-dihydro-8-oxoguanine (8-oxoG). Has AP (apurinic/apyrimidinic) lyase activity and introduces nicks in the DNA strand. Cleaves the DNA backbone by beta-delta elimination to generate a single-strand break at the site of the removed base with both 3'- and 5'-phosphates. This chain is Formamidopyrimidine-DNA glycosylase, found in Salinispora arenicola (strain CNS-205).